Here is a 357-residue protein sequence, read N- to C-terminus: Anthranilate phosphoribosyltransferase (357 aa).

5-phospho-alpha-D-ribose 1-diphosphate-binding positions include G91, 94-95 (GD), T99, 101-104 (NIST), 119-127 (KHGNRSVSS), and S131. G91 lines the anthranilate pocket. A Mg(2+)-binding site is contributed by S103. N122 serves as a coordination point for anthranilate. An anthranilate-binding site is contributed by R177. D235 and E236 together coordinate Mg(2+).

Belongs to the anthranilate phosphoribosyltransferase family. In terms of assembly, homodimer. It depends on Mg(2+) as a cofactor.

It carries out the reaction N-(5-phospho-beta-D-ribosyl)anthranilate + diphosphate = 5-phospho-alpha-D-ribose 1-diphosphate + anthranilate. It functions in the pathway amino-acid biosynthesis; L-tryptophan biosynthesis; L-tryptophan from chorismate: step 2/5. Catalyzes the transfer of the phosphoribosyl group of 5-phosphorylribose-1-pyrophosphate (PRPP) to anthranilate to yield N-(5'-phosphoribosyl)-anthranilate (PRA). This chain is Anthranilate phosphoribosyltransferase, found in Shewanella baltica (strain OS195).